The primary structure comprises 318 residues: Vomeronasal type-1 receptor A11 (318 aa).

Residues 1–32 lie on the Extracellular side of the membrane; sequence MSEILFFSPQPLFSHMMNKNSRLHTHSNIKNT. Residues 33–53 traverse the membrane as a helical segment; the sequence is FFSEIGIGISGNSFLLLFHIL. Residues 54–65 lie on the Cytoplasmic side of the membrane; sequence KFIRGHRPRLTD. The chain crosses the membrane as a helical span at residues 66–86; that stretch reads LPIGLLSLIHLLMLLLMAFIA. At 87–101 the chain is on the extracellular side; it reads TDIFISRRGWDGIIC. C101 and C188 are disulfide-bonded. Residues 102–118 traverse the membrane as a helical segment; the sequence is KFLVYLYGVLRGLSLCT. The Cytoplasmic portion of the chain corresponds to 119–147; that stretch reads TSMLSVLQAIILSPRSSCLAKLKHKSPHH. Residues 148–168 form a helical membrane-spanning segment; sequence ISCAIIFLSVLYMLISSHILL. Topologically, residues 169–206 are extracellular; that stretch reads SITATPNLTMNDFLYVSQSCSLLPLSYLVQSMYSTLLA. A glycan (N-linked (GlcNAc...) asparagine) is linked at N175. The chain crosses the membrane as a helical span at residues 207–227; sequence LREVFLISLMVLSTLYMVVLL. Residues 228 to 254 are Cytoplasmic-facing; it reads CRHRKQAQHLQGTSLSPKASAEQRATQ. Residues 255–275 traverse the membrane as a helical segment; it reads TILMLMTFFVLMSIFDSIVSC. Residues 276 to 285 are Extracellular-facing; sequence SRTMFLDDPT. Residues 286 to 306 form a helical membrane-spanning segment; it reads SYSIHIFVMHIYATVSPFVFM. Topologically, residues 307 to 318 are cytoplasmic; the sequence is STEKHIVNILRG.

It belongs to the G-protein coupled receptor 1 family.

The protein resides in the cell membrane. Functionally, putative pheromone receptor implicated in the regulation of social and reproductive behavior. In Mus musculus (Mouse), this protein is Vomeronasal type-1 receptor A11.